Consider the following 122-residue polypeptide: Large ribosomal subunit protein uL14 (122 aa).

It belongs to the universal ribosomal protein uL14 family. Part of the 50S ribosomal subunit. Forms a cluster with proteins L3 and L19. In the 70S ribosome, L14 and L19 interact and together make contacts with the 16S rRNA in bridges B5 and B8.

Binds to 23S rRNA. Forms part of two intersubunit bridges in the 70S ribosome. This is Large ribosomal subunit protein uL14 from Borrelia recurrentis (strain A1).